Consider the following 393-residue polypeptide: MTSDQIKQLDANYIAQTYAKFDLALSHGQGCEVWDFDGNKYLDFTSGIGVNSLGWADPDWLEAVIAQLHKLSHTSNLFYTEPSARLAKHLVQVSGLKRVFFANSGAEANEGAIKVARKYSHDKYGDTRSTIISLVNSFHGRTISTLAATGQKLFHQHFFPFTAGFEHLIANDLNAFKTRIAQNDICAIILEVVQGEGGVCSLDQAYLQAVQGLCQVQDILLIIDEVQTGIGRTGTMFAYQQFELKPDIVTLAKGLAGGLPIGAFLLADKVAETLAKGDHGSTFGANPVSCAAANAVLTKLEPLFLTEVMRKGQKLRKALQSLPHVKSISGLGLMIGVEFDEHINVADVVTNCLKQGVLFLTAKTKLRMLPPLIINDEQLERGVTVLAQVLSEM.

Residues 105-106 (GA) and F138 contribute to the pyridoxal 5'-phosphate site. A N(2)-acetyl-L-ornithine-binding site is contributed by R141. A pyridoxal 5'-phosphate-binding site is contributed by 224–227 (DEVQ). An N6-(pyridoxal phosphate)lysine modification is found at K253. S281 serves as a coordination point for N(2)-acetyl-L-ornithine. Pyridoxal 5'-phosphate is bound at residue T282.

Belongs to the class-III pyridoxal-phosphate-dependent aminotransferase family. ArgD subfamily. Homodimer. Requires pyridoxal 5'-phosphate as cofactor.

The protein resides in the cytoplasm. It catalyses the reaction N(2)-acetyl-L-ornithine + 2-oxoglutarate = N-acetyl-L-glutamate 5-semialdehyde + L-glutamate. It participates in amino-acid biosynthesis; L-arginine biosynthesis; N(2)-acetyl-L-ornithine from L-glutamate: step 4/4. This chain is Acetylornithine aminotransferase, found in Haemophilus ducreyi (strain 35000HP / ATCC 700724).